Here is a 365-residue protein sequence, read N- to C-terminus: Putative ankyrin repeat protein R903 (365 aa).

ANK repeat units lie at residues 38–67, 68–97, 99–127, 129–158, 184–213, 214–243, 245–273, 275–298, 299–328, and 330–361; these read NINS…DIRF, QNNE…DIFI, NNFC…KFSN, SKPI…NINK, KFKD…GNIT, VSNN…RFPR, SNEL…SIVD, LLNI…LKNV, NLQK…NPDE, and RTYL…KLQS.

This Acanthamoeba polyphaga mimivirus (APMV) protein is Putative ankyrin repeat protein R903.